The sequence spans 204 residues: Elongation factor Ts (204 aa).

The interval 80–83 (TDFV) is involved in Mg(2+) ion dislocation from EF-Tu.

It belongs to the EF-Ts family.

The protein resides in the cytoplasm. Associates with the EF-Tu.GDP complex and induces the exchange of GDP to GTP. It remains bound to the aminoacyl-tRNA.EF-Tu.GTP complex up to the GTP hydrolysis stage on the ribosome. In Thermoanaerobacter sp. (strain X514), this protein is Elongation factor Ts.